The following is a 145-amino-acid chain: Large ribosomal subunit protein bL17 (145 aa).

Residues 123–145 are disordered; sequence KRVDRKKKDPAKDKTEEKKLATA.

It belongs to the bacterial ribosomal protein bL17 family. Part of the 50S ribosomal subunit. Contacts protein L32.

The polypeptide is Large ribosomal subunit protein bL17 (Pelagibacter ubique (strain HTCC1062)).